The chain runs to 290 residues: Arylamine N-acetyltransferase 2 (290 aa).

C68 functions as the Acyl-thioester intermediate in the catalytic mechanism. The CoA site is built by S103 and G104. Position 106 to 107 (106 to 107) interacts with substrate; it reads IH. Residues H107 and D122 contribute to the active site. Y208 provides a ligand contact to CoA.

The protein belongs to the arylamine N-acetyltransferase family.

The protein resides in the cytoplasm. The enzyme catalyses an arylamine + acetyl-CoA = an N-acetylarylamine + CoA. The catalysed reaction is an N-hydroxyarylamine + acetyl-CoA = an N-acetoxyarylamine + CoA. Its function is as follows. Catalyzes the N- or O-acetylation of various arylamine and heterocyclic amine substrates. Participates in the detoxification of a plethora of hydrazine and arylamine drugs. In Rattus norvegicus (Rat), this protein is Arylamine N-acetyltransferase 2 (Nat2).